The chain runs to 394 residues: Probable peptidoglycan glycosyltransferase FtsW (394 aa).

Residues 1–26 lie on the Cytoplasmic side of the membrane; sequence MNTMRPRHLNQRGKPVSRPISLYDKW. Residues 27-47 form a helical membrane-spanning segment; that stretch reads LIGAVFGLLIIGLMMVASSSV. Topologically, residues 48–57 are periplasmic; that stretch reads MISTKYFHQP. Residues 58–78 traverse the membrane as a helical segment; the sequence is FHFLIRQACYLFVGLLLALIV. Residues 79–88 are Cytoplasmic-facing; sequence VRTDSSFWEK. Residues 89 to 109 traverse the membrane as a helical segment; it reads ISMPMMIGCVFLLLIVLIPGI. Residues 110–118 lie on the Periplasmic side of the membrane; that stretch reads GKSVNGSRR. A helical membrane pass occupies residues 119-139; the sequence is WLALGPIGVQVSELTKLAMIF. Topologically, residues 140-154 are cytoplasmic; that stretch reads YLSGYLVRQQEAVCE. A helical transmembrane segment spans residues 155–175; the sequence is SIFGFIKPMAILAVVSVLLLL. Residues 176–177 are Periplasmic-facing; sequence EP. A helical membrane pass occupies residues 178–198; it reads DFGATVVISGTVMAMLFLAGV. Topologically, residues 199-201 are cytoplasmic; that stretch reads KLR. The helical transmembrane segment at 202-222 threads the bilayer; it reads YYFGLMLVVVTALALLAVSSP. At 223–278 the chain is on the periplasmic side; the sequence is YRVARLTAFLDPWADQYNSGYQLTQSLIAFGRGGWFGTGLGESIQKLLYLPEAHTD. A helical transmembrane segment spans residues 279–299; it reads FLFAVIAEELGLFGILVVITL. The Cytoplasmic segment spans residues 300–327; that stretch reads YSILVIRGLNIGYTAYTQERHFASYTAY. A helical transmembrane segment spans residues 328 to 348; sequence GLTIWLALQASINMGVNAGLL. Topologically, residues 349–354 are periplasmic; sequence PTKGLT. The helical transmembrane segment at 355–375 threads the bilayer; it reads LPLLSYGGASMVINCIVIALL. Residues 376 to 394 lie on the Cytoplasmic side of the membrane; that stretch reads LRIDHENRWQSLGLRPLTA.

Belongs to the SEDS family. FtsW subfamily.

Its subcellular location is the cell inner membrane. It catalyses the reaction [GlcNAc-(1-&gt;4)-Mur2Ac(oyl-L-Ala-gamma-D-Glu-L-Lys-D-Ala-D-Ala)](n)-di-trans,octa-cis-undecaprenyl diphosphate + beta-D-GlcNAc-(1-&gt;4)-Mur2Ac(oyl-L-Ala-gamma-D-Glu-L-Lys-D-Ala-D-Ala)-di-trans,octa-cis-undecaprenyl diphosphate = [GlcNAc-(1-&gt;4)-Mur2Ac(oyl-L-Ala-gamma-D-Glu-L-Lys-D-Ala-D-Ala)](n+1)-di-trans,octa-cis-undecaprenyl diphosphate + di-trans,octa-cis-undecaprenyl diphosphate + H(+). It functions in the pathway cell wall biogenesis; peptidoglycan biosynthesis. Its function is as follows. Peptidoglycan polymerase that is essential for cell division. The chain is Probable peptidoglycan glycosyltransferase FtsW from Legionella pneumophila subsp. pneumophila (strain Philadelphia 1 / ATCC 33152 / DSM 7513).